A 340-amino-acid polypeptide reads, in one-letter code: Cysteinyl leukotriene receptor 1 (340 aa).

Over 1-31 the chain is Extracellular; that stretch reads MDGVRNLTVSCASSNTCNDTIDDFRNQVYST. N-linked (GlcNAc...) asparagine glycosylation is found at Asn6 and Asn18. A helical membrane pass occupies residues 32–52; that stretch reads LYSMITVVGFFGNGFVLYVLI. Over 53–60 the chain is Cytoplasmic; sequence KTYHEKSA. A helical transmembrane segment spans residues 61–81; sequence YQVYMINLAVADLLCVCTLPL. Residues 82-109 lie on the Extracellular side of the membrane; the sequence is RVVYYVHKGIWLFGDFLCRLSTYALYVN. Cys99 and Cys176 form a disulfide bridge. A helical transmembrane segment spans residues 110 to 130; sequence LYCSIFFMTAMSFFRCIAIVF. Residues 131 to 144 are Cytoplasmic-facing; it reads PVQNINLITHKKAK. The chain crosses the membrane as a helical span at residues 145–165; sequence IVCIAIWIFVILTSSPFLMST. The Extracellular portion of the chain corresponds to 166 to 196; the sequence is SYKDEKNNTKCFEPPQXNQAKYHVLVLHYVS. Asn172 carries an N-linked (GlcNAc...) asparagine glycan. Residues 197-217 traverse the membrane as a helical segment; the sequence is LFVGFIIPFVIIIVCYTMIIL. Residues 218–233 lie on the Cytoplasmic side of the membrane; sequence TLLKNSMKKNISSRKK. The chain crosses the membrane as a helical span at residues 234 to 254; sequence AIGMIIVVTAAFLISFMPYHI. Residues 255-279 are Extracellular-facing; it reads QRTIHLHFLHNDTKHCDSVLRMQKS. Asn265 is a glycosylation site (N-linked (GlcNAc...) asparagine). A helical membrane pass occupies residues 280 to 300; the sequence is VXITLSLAASNCCFDPLLYFF. The Cytoplasmic segment spans residues 301 to 340; that stretch reads SGGNFREGLSTFRKHSLSTMTYVPKKKTSLPEKAQEIYKE.

It belongs to the G-protein coupled receptor 1 family.

It is found in the cell membrane. In terms of biological role, receptor for cysteinyl leukotrienes mediating constriction of the microvascular smooth muscle during an inflammatory response. This response is mediated via a G-protein that activates a phosphatidylinositol-calcium second messenger system. In Sus scrofa (Pig), this protein is Cysteinyl leukotriene receptor 1 (CYSLTR1).